The sequence spans 181 residues: Putative manganese efflux pump MntP (181 aa).

Helical transmembrane passes span 35–55 (IIFG…GSIA), 59–79 (VADW…LLMI), 102–122 (AATG…LAFI), 126–146 (ILIT…LGVM), and 161–181 (ILGG…HLTM).

The protein belongs to the MntP (TC 9.B.29) family.

It localises to the cell inner membrane. Its function is as follows. Probably functions as a manganese efflux pump. The protein is Putative manganese efflux pump MntP of Nitrosomonas eutropha (strain DSM 101675 / C91 / Nm57).